Reading from the N-terminus, the 336-residue chain is Anthranilate phosphoribosyltransferase (336 aa).

5-phospho-alpha-D-ribose 1-diphosphate contacts are provided by residues glycine 81, 84 to 85, serine 89, 91 to 94, 109 to 117, and alanine 121; these read GD, NIST, and KHGNRGLSS. Residue glycine 81 participates in anthranilate binding. Residue serine 93 participates in Mg(2+) binding. Asparagine 112 serves as a coordination point for anthranilate. Arginine 167 provides a ligand contact to anthranilate. The Mg(2+) site is built by aspartate 225 and glutamate 226.

Belongs to the anthranilate phosphoribosyltransferase family. In terms of assembly, homodimer. The cofactor is Mg(2+).

It catalyses the reaction N-(5-phospho-beta-D-ribosyl)anthranilate + diphosphate = 5-phospho-alpha-D-ribose 1-diphosphate + anthranilate. It participates in amino-acid biosynthesis; L-tryptophan biosynthesis; L-tryptophan from chorismate: step 2/5. In terms of biological role, catalyzes the transfer of the phosphoribosyl group of 5-phosphorylribose-1-pyrophosphate (PRPP) to anthranilate to yield N-(5'-phosphoribosyl)-anthranilate (PRA). The sequence is that of Anthranilate phosphoribosyltransferase from Mesorhizobium japonicum (strain LMG 29417 / CECT 9101 / MAFF 303099) (Mesorhizobium loti (strain MAFF 303099)).